The primary structure comprises 170 residues: ATP synthase subunit b (170 aa).

Residues 15–37 (FNLFETNILNWAVVIFGLYKFLP) form a helical membrane-spanning segment. Residues 72–98 (AKKDLSSAEEKASQIKADSLKRSESIR) are disordered.

Belongs to the ATPase B chain family. As to quaternary structure, F-type ATPases have 2 components, F(1) - the catalytic core - and F(0) - the membrane proton channel. F(1) has five subunits: alpha(3), beta(3), gamma(1), delta(1), epsilon(1). F(0) has four main subunits: a(1), b(1), b'(1) and c(10-14). The alpha and beta chains form an alternating ring which encloses part of the gamma chain. F(1) is attached to F(0) by a central stalk formed by the gamma and epsilon chains, while a peripheral stalk is formed by the delta, b and b' chains.

The protein resides in the cellular thylakoid membrane. Functionally, f(1)F(0) ATP synthase produces ATP from ADP in the presence of a proton or sodium gradient. F-type ATPases consist of two structural domains, F(1) containing the extramembraneous catalytic core and F(0) containing the membrane proton channel, linked together by a central stalk and a peripheral stalk. During catalysis, ATP synthesis in the catalytic domain of F(1) is coupled via a rotary mechanism of the central stalk subunits to proton translocation. Component of the F(0) channel, it forms part of the peripheral stalk, linking F(1) to F(0). The sequence is that of ATP synthase subunit b from Prochlorococcus marinus (strain MIT 9215).